The chain runs to 397 residues: Tryptophan synthase beta chain 1 (397 aa).

Lys-94 is modified (N6-(pyridoxal phosphate)lysine).

This sequence belongs to the TrpB family. In terms of assembly, tetramer of two alpha and two beta chains. It depends on pyridoxal 5'-phosphate as a cofactor.

It carries out the reaction (1S,2R)-1-C-(indol-3-yl)glycerol 3-phosphate + L-serine = D-glyceraldehyde 3-phosphate + L-tryptophan + H2O. The protein operates within amino-acid biosynthesis; L-tryptophan biosynthesis; L-tryptophan from chorismate: step 5/5. Its function is as follows. The beta subunit is responsible for the synthesis of L-tryptophan from indole and L-serine. This chain is Tryptophan synthase beta chain 1 (trpB1), found in Archaeoglobus fulgidus (strain ATCC 49558 / DSM 4304 / JCM 9628 / NBRC 100126 / VC-16).